Consider the following 1288-residue polypeptide: 5-oxoprolinase (1288 aa).

Position 151 is a phosphothreonine (Thr151). Residues 1248–1272 (PGGGGYGDPEDPAPPPGSPPQALAF) are disordered. Position 1265 is a phosphoserine (Ser1265).

Belongs to the oxoprolinase family. Homodimer.

The protein resides in the cytoplasm. It localises to the cytosol. It carries out the reaction 5-oxo-L-proline + ATP + 2 H2O = L-glutamate + ADP + phosphate + H(+). Functionally, catalyzes the cleavage of 5-oxo-L-proline to form L-glutamate coupled to the hydrolysis of ATP to ADP and inorganic phosphate. This chain is 5-oxoprolinase, found in Homo sapiens (Human).